The following is a 425-amino-acid chain: GTPase Obg (425 aa).

The Obg domain occupies 1–158; that stretch reads MFKDYAKIHV…LWLELELKLL (158 aa). The OBG-type G domain maps to 159 to 329; that stretch reads ADVGLVGFPN…LIYRTYRLLE (171 aa). Residues 165–172, 190–194, 212–215, 282–285, and 310–312 contribute to the GTP site; these read GFPNAGKS, FTTLE, DIPG, NKTD, and SAL. Mg(2+) contacts are provided by S172 and T192. One can recognise an OCT domain in the interval 341–421; that stretch reads VPDERETDVT…IGRFEFEYSE (81 aa).

Belongs to the TRAFAC class OBG-HflX-like GTPase superfamily. OBG GTPase family. Monomer. Mg(2+) is required as a cofactor.

The protein localises to the cytoplasm. In terms of biological role, an essential GTPase which binds GTP, GDP and possibly (p)ppGpp with moderate affinity, with high nucleotide exchange rates and a fairly low GTP hydrolysis rate. Plays a role in control of the cell cycle, stress response, ribosome biogenesis and in those bacteria that undergo differentiation, in morphogenesis control. The chain is GTPase Obg from Desulforudis audaxviator (strain MP104C).